Here is a 197-residue protein sequence, read N- to C-terminus: Adenylyl-sulfate kinase (197 aa).

Residue 31–38 (GLSGAGKS) participates in ATP binding. Ser-105 acts as the Phosphoserine intermediate in catalysis.

It belongs to the APS kinase family.

The enzyme catalyses adenosine 5'-phosphosulfate + ATP = 3'-phosphoadenylyl sulfate + ADP + H(+). It participates in sulfur metabolism; hydrogen sulfide biosynthesis; sulfite from sulfate: step 2/3. Its function is as follows. Catalyzes the synthesis of activated sulfate. This Aeromonas hydrophila subsp. hydrophila (strain ATCC 7966 / DSM 30187 / BCRC 13018 / CCUG 14551 / JCM 1027 / KCTC 2358 / NCIMB 9240 / NCTC 8049) protein is Adenylyl-sulfate kinase.